A 437-amino-acid chain; its full sequence is Trigger factor (437 aa).

The PPIase FKBP-type domain occupies Gly-164–Pro-249.

The protein belongs to the FKBP-type PPIase family. Tig subfamily.

Its subcellular location is the cytoplasm. The catalysed reaction is [protein]-peptidylproline (omega=180) = [protein]-peptidylproline (omega=0). In terms of biological role, involved in protein export. Acts as a chaperone by maintaining the newly synthesized protein in an open conformation. Functions as a peptidyl-prolyl cis-trans isomerase. The sequence is that of Trigger factor from Azoarcus sp. (strain BH72).